Consider the following 22-residue polypeptide: RCCTGKKGSCSGRACKNLKCCA.

Disulfide bonds link Cys-2-Cys-15, Cys-3-Cys-20, and Cys-10-Cys-21. Ala-22 is modified (alanine amide).

Belongs to the conotoxin M superfamily. In terms of tissue distribution, expressed by the venom duct.

Its subcellular location is the secreted. Mu-conotoxins block voltage-gated sodium channels (Nav). This synthetic toxin potently blocks rNav1.4/SCN4A (IC(50)= 7 nM). It also moderately blocks rNav1.1/SCN1A (IC(50)=370 nM), rNav1.2/SCN2A (IC(50)=1 uM), and mNav1.6/SCN6A (IC(50)=570 nM). It is noteworthy that coexpression of subunits beta-2 or beta-4 (but not beta-1 or beta-3) decrease by more that 10-fold the binding potency of the toxin to rNav1.6. It is also noteworthy that the toxin is 50-fold more potent on mouse Nav1.6 than on rat Nav1.6. In vivo, when injected intraperitoneally or subcutaneously in mice, causes motor impairment, paralysis and death. The polypeptide is Mu-conotoxin SxIIIA (Conus striolatus (Cone snail)).